The sequence spans 600 residues: Chaperone protein DnaK (600 aa).

A Phosphothreonine; by autocatalysis modification is found at threonine 175. The span at 569-578 shows a compositional bias: low complexity; that stretch reads SFAQATAQQA. A disordered region spans residues 569 to 600; the sequence is SFAQATAQQANTSESDPKADDSNTIDAEIKQD. Residues 583 to 600 show a composition bias toward basic and acidic residues; that stretch reads SDPKADDSNTIDAEIKQD.

This sequence belongs to the heat shock protein 70 family.

Functionally, acts as a chaperone. The sequence is that of Chaperone protein DnaK from Mesomycoplasma hyopneumoniae (strain J / ATCC 25934 / NCTC 10110) (Mycoplasma hyopneumoniae).